The following is a 289-amino-acid chain: ATP synthase gamma chain (289 aa).

This sequence belongs to the ATPase gamma chain family. In terms of assembly, F-type ATPases have 2 components, CF(1) - the catalytic core - and CF(0) - the membrane proton channel. CF(1) has five subunits: alpha(3), beta(3), gamma(1), delta(1), epsilon(1). CF(0) has three main subunits: a, b and c.

It localises to the cell membrane. Its function is as follows. Produces ATP from ADP in the presence of a proton gradient across the membrane. The gamma chain is believed to be important in regulating ATPase activity and the flow of protons through the CF(0) complex. The chain is ATP synthase gamma chain from Alkaliphilus metalliredigens (strain QYMF).